Consider the following 180-residue polypeptide: Stathmin-3 (180 aa).

Residues Cys22 and Cys24 are each lipidated (S-palmitoyl cysteine). In terms of domain architecture, SLD spans 38–180; it reads GDMEVKQLDK…NKEQREEMSG (143 aa). Residues Ser50, Ser60, Ser65, Ser68, Ser72, Ser73, and Ser81 each carry the phosphoserine modification. Positions 59–82 are disordered; the sequence is KSPSDLSPESPMLSSPPKKKDTSL. Residues 60 to 74 are compositionally biased toward low complexity; sequence SPSDLSPESPMLSSP. Residues 75-179 adopt a coiled-coil conformation; that stretch reads PKKKDTSLEE…RNKEQREEMS (105 aa).

This sequence belongs to the stathmin family. In terms of assembly, interacts with STAT3. Interacts with CLU (secreted form); this interaction may act as an important modulator during neuronal differentiation. Post-translationally, N-terminal palmitoylation promotes specific anchoring to the cytosolic leaflet of Golgi membranes and subsequent vesicular trafficking along dendrites and axons. Neuronal Stathmins are substrates for palmitoyltransferases ZDHHC3, ZDHHC7 and ZDHHC15. Neuron specific.

The protein resides in the golgi apparatus. It localises to the cell projection. The protein localises to the growth cone. Its subcellular location is the axon. It is found in the cytoplasm. The protein resides in the cytosol. In terms of biological role, exhibits microtubule-destabilizing activity, which is antagonized by STAT3. This Homo sapiens (Human) protein is Stathmin-3 (STMN3).